The following is a 1486-amino-acid chain: Homeobox protein cut-like 2 (1486 aa).

Positions 114–167 are disordered; it reads DRLQPPSFDPSGQPRRDLHTSWKRNPELLSPKEQREGTSPAGPTLTEGSRLPGI. A compositionally biased stretch (basic and acidic residues) spans 127–149; it reads PRRDLHTSWKRNPELLSPKEQRE. S143 bears the Phosphoserine mark. Residues 195 to 374 are a coiled coil; it reads TLAARLGEAE…IKTELSILKA (180 aa). Disordered regions lie at residues 415 to 481, 517 to 549, 661 to 690, 716 to 758, 800 to 858, and 964 to 1032; these read LLAS…LSPF, PTAP…PGAE, EIES…STSE, VAPR…AQAP, YASV…EGAT, and GQAV…SGSQ. Positions 419 to 428 are enriched in acidic residues; sequence PEEDPSEDDS. Pro residues predominate over residues 443–460; it reads QQLPPPPGPEDPLSPSPG. The segment covering 461–470 has biased composition (low complexity); that stretch reads QPLLGPSLGP. The span at 517–532 shows a compositional bias: pro residues; the sequence is PTAPATPAPGPEPLGG. Residues 544 to 631 constitute a DNA-binding region (CUT 1); it reads AGPGAEEEQL…VLALRTIQVR (88 aa). Residues 680-690 show a composition bias toward polar residues; sequence ANGTTPASTSE. Residues 690-717 adopt a coiled-coil conformation; it reads EDAIKSILEQARREMQAQQQALLEMEVA. The segment covering 802–816 has biased composition (low complexity); it reads SVSPSLSSSSSSGYS. Residues 834–844 are compositionally biased toward acidic residues; it reads PEDEAAAGAED. Residues 845–854 show a composition bias toward basic and acidic residues; the sequence is EPPRTGELKA. A DNA-binding region (CUT 2) is located at residues 887 to 974; that stretch reads QYELYMYREV…QAVGQQPGAS (88 aa). The segment covering 967–976 has biased composition (polar residues); sequence VGQQPGASQA. The span at 1017–1031 shows a compositional bias: low complexity; the sequence is GRSSSSLSGKMYSGS. The CUT 3 DNA-binding region spans 1038–1125; sequence QEIVAMSPEL…VEKLRDMKKL (88 aa). The homeobox DNA-binding region spans 1168–1227; it reads IKKPRVVLAPEEKEALRKAYQLEPYPSQQTIELLSFQLNLKTNTVINWFHNYRSRMRREM. The interval 1231–1453 is disordered; sequence GTQDEPDLDP…ALHPSAKVNP (223 aa). Over residues 1266 to 1276 the composition is skewed to basic and acidic residues; it reads EDQKPTVKELE. The segment covering 1283-1293 has biased composition (polar residues); sequence ENSTPLTTQDK. The segment covering 1320–1334 has biased composition (basic and acidic residues); the sequence is ELDKGQGPPKEEHPD. The segment covering 1381-1401 has biased composition (polar residues); the sequence is KSASESSRCSLEVSLNSPSAA. Residues 1402-1420 show a composition bias toward low complexity; that stretch reads SSPGLMMSVSPVPSSSAPI. Residues 1421-1431 show a composition bias toward pro residues; the sequence is SPSPPGAPPAK.

This sequence belongs to the CUT homeobox family.

Its subcellular location is the nucleus. Functionally, transcription factor involved in the control of neuronal proliferation and differentiation in the brain. Regulates dendrite development and branching, dendritic spine formation, and synaptogenesis in cortical layers II-III. Binds to DNA in a sequence-specific manner. The chain is Homeobox protein cut-like 2 (CUX2) from Homo sapiens (Human).